Consider the following 289-residue polypeptide: Zinc finger matrin-type protein 3 (289 aa).

Residues 1 to 42 (MILLQHAVLPPPKQPSPSPPMSVATRSTGTLQLPPQKPFGQE) are disordered. The segment covering 9-20 (LPPPKQPSPSPP) has biased composition (pro residues). The segment covering 24–33 (ATRSTGTLQL) has biased composition (polar residues). 2 Matrin-type zinc fingers span residues 70–100 (LYCK…KLRN) and 147–177 (DYCK…RLRL). The span at 180-191 (AQSNSFSESSEL) shows a compositional bias: polar residues. Residues 180 to 201 (AQSNSFSESSELGQRRARKEGN) form a disordered region. Residues 246 to 276 (FYCSMCNVGAGEEMEFRQHLESKQHKSKVSE) form a Matrin-type 3 zinc finger.

As to quaternary structure, interacts with dsRNA. As to expression, highly expressed in adult brain, and moderately in adult kidney and testis. Not detected in fetal brain, heart, pancreas, adrenal gland, liver or small intestine.

The protein resides in the nucleus. The protein localises to the nucleolus. Acts as a bona fide target gene of p53/TP53. May play a role in the TP53-dependent growth regulatory pathway. May contribute to TP53-mediated apoptosis by regulation of TP53 expression and translocation to the nucleus and nucleolus. The protein is Zinc finger matrin-type protein 3 of Homo sapiens (Human).